The sequence spans 158 residues: Endoribonuclease YbeY (158 aa).

Residues His124, His128, and His134 each contribute to the Zn(2+) site.

Belongs to the endoribonuclease YbeY family. Zn(2+) serves as cofactor.

Its subcellular location is the cytoplasm. Its function is as follows. Single strand-specific metallo-endoribonuclease involved in late-stage 70S ribosome quality control and in maturation of the 3' terminus of the 16S rRNA. The polypeptide is Endoribonuclease YbeY (Caldanaerobacter subterraneus subsp. tengcongensis (strain DSM 15242 / JCM 11007 / NBRC 100824 / MB4) (Thermoanaerobacter tengcongensis)).